A 208-amino-acid polypeptide reads, in one-letter code: Small ribosomal subunit protein eS8 (208 aa).

Positions 1–37 are disordered; sequence MGISRDNWHKRRKTGGKRKPYHKKRKYEPGRPAANTK. Residues 8-26 show a composition bias toward basic residues; sequence WHKRRKTGGKRKPYHKKRK.

It belongs to the eukaryotic ribosomal protein eS8 family. In terms of assembly, component of the small ribosomal subunit. Identified in a IGF2BP1-dependent mRNP granule complex containing untranslated mRNAs. Part of the small subunit (SSU) processome, composed of more than 70 proteins and the RNA chaperone small nucleolar RNA (snoRNA) U3.

The protein localises to the cytoplasm. Its subcellular location is the membrane. It localises to the nucleus. The protein resides in the nucleolus. Functionally, component of the small ribosomal subunit. The ribosome is a large ribonucleoprotein complex responsible for the synthesis of proteins in the cell. Part of the small subunit (SSU) processome, first precursor of the small eukaryotic ribosomal subunit. During the assembly of the SSU processome in the nucleolus, many ribosome biogenesis factors, an RNA chaperone and ribosomal proteins associate with the nascent pre-rRNA and work in concert to generate RNA folding, modifications, rearrangements and cleavage as well as targeted degradation of pre-ribosomal RNA by the RNA exosome. The chain is Small ribosomal subunit protein eS8 (rps8) from Xenopus laevis (African clawed frog).